Consider the following 224-residue polypeptide: BOS complex subunit TMEM147 (224 aa).

The helical transmembrane segment at 1-21 (MTLFHFGNCFALAYFPYFITY) threads the bilayer. The Cytoplasmic segment spans residues 22-34 (KCSGLSEYNAFWK). A helical transmembrane segment spans residues 35–58 (CVQAGVTYLFVQLCKMLFLATFFP). Over 59–66 (TWEGGIYD) the chain is Lumenal. The helical transmembrane segment at 67–88 (FIGEFMKASVDVADLIGLNLVM) threads the bilayer. Over 89-98 (SRNAGKGEYK) the chain is Cytoplasmic. A helical transmembrane segment spans residues 99 to 124 (IMVAALGWATAELIMSRCIPLWVGAR). Over 125 to 129 (GIEFD) the chain is Lumenal. The helical transmembrane segment at 130–155 (WKYIQMSIDSNISLVHYIVASAQVWM) threads the bilayer. Residues 156–164 (ITRYDLYHT) lie on the Cytoplasmic side of the membrane. The chain crosses the membrane as a helical span at residues 165–187 (FRPAVLLLMFLSVYKAFVMETFV). Residues 188–194 (HLCSLGS) are Lumenal-facing. A helical membrane pass occupies residues 195-216 (WTALLARAVVTGLLALSTLALY). The Cytoplasmic segment spans residues 217-224 (VAVVNVHS).

It belongs to the TMEM147 family. In terms of assembly, component of the back of Sec61 (BOS) complex, composed of NCLN/Nicalin, NOMO1 and TMEM147. The BOS complex is part of the multi-pass translocon (MPT) complex, composed of three subcomplexes, the GEL complex (composed of RAB5IF/OPTI and TMCO1), the BOS complex (composed of NCLN/Nicalin, NOMO1 and TMEM147) and the PAT complex (composed of WDR83OS/Asterix and CCDC47). The MPT complex associates with the SEC61 complex. Interacts with CHRM3, CHRM1 and AVPR2. Interacts with LBR; promoting LBR localization to the nucleus inner membrane. Interacts with DHCR7.

The protein localises to the endoplasmic reticulum membrane. The protein resides in the nucleus membrane. Its subcellular location is the cell membrane. Its function is as follows. Component of the multi-pass translocon (MPT) complex that mediates insertion of multi-pass membrane proteins into the lipid bilayer of membranes. The MPT complex takes over after the SEC61 complex: following membrane insertion of the first few transmembrane segments of proteins by the SEC61 complex, the MPT complex occludes the lateral gate of the SEC61 complex to promote insertion of subsequent transmembrane regions. Also acts as a negative regulator of CHRM3 function, most likely by interfering with its trafficking to the cell membrane. Negatively regulates CHRM3-mediated calcium mobilization and activation of RPS6KA1/p90RSK activity. Regulates LBR localization to the nucleus inner membrane. This Canis lupus familiaris (Dog) protein is BOS complex subunit TMEM147.